Here is a 236-residue protein sequence, read N- to C-terminus: Small ribosomal subunit protein uS2c (236 aa).

Belongs to the universal ribosomal protein uS2 family.

Its subcellular location is the plastid. The protein localises to the chloroplast. This chain is Small ribosomal subunit protein uS2c (rps2), found in Piper cenocladum (Ant piper).